The primary structure comprises 862 residues: Pentatricopeptide repeat-containing protein At1g74850, chloroplastic (862 aa).

The transit peptide at 1-66 (MNLAIPNPNS…DLVLGNPSVS (66 aa)) directs the protein to the chloroplast. PPR repeat units follow at residues 104–139 (SLNDFALVFKEFAGRGDWQRSLRLFKYMQRQIWCKP), 140–174 (NEHIYTIMISLLGREGLLDKCLEVFDEMPSQGVSR), 175–209 (SVFSYTALINAYGRNGRYETSLELLDRMKNEKISP), 210–245 (SILTYNTVINACARGGLDWEGLLGLFAEMRHEGIQP), 246–280 (DIVTYNTLLSACAIRGLGDEAEMVFRTMNDGGIVP), 281–315 (DLTTYSHLVETFGKLRRLEKVCDLLGEMASGGSLP), 316–350 (DITSYNVLLEAYAKSGSIKEAMGVFHQMQAAGCTP), 351–385 (NANTYSVLLNLFGQSGRYDDVRQLFLEMKSSNTDP), 386–420 (DAATYNILIEVFGEGGYFKEVVTLFHDMVEENIEP), 421–455 (DMETYEGIIFACGKGGLHEDARKILQYMTANDIVP), 456–490 (SSKAYTGVIEAFGQAALYEEALVAFNTMHEVGSNP), 491–525 (SIETFHSLLYSFARGGLVKESEAILSRLVDSGIPR), 526–560 (NRDTFNAQIEAYKQGGKFEEAVKTYVDMEKSRCDP), 561–595 (DERTLEAVLSVYSFARLVDECREQFEEMKASDILP), and 596–630 (SIMCYCMMLAVYGKTERWDDVNELLEEMLSNRVSN). One can recognise a Smr domain in the interval 713–801 (VDVHRMSEGG…RIMCQRSQLK (89 aa)). The interval 831 to 862 (GTRASTSSDTNHSGNPTQRRTRTKKELAGSTA) is disordered. Positions 833–848 (RASTSSDTNHSGNPTQ) are enriched in polar residues.

The protein belongs to the PPR family. P subfamily. Mostly expressed in leaves, stems and flowers, but barely in roots.

It is found in the plastid. It localises to the chloroplast. In terms of biological role, involved in plastid gene expression. This Arabidopsis thaliana (Mouse-ear cress) protein is Pentatricopeptide repeat-containing protein At1g74850, chloroplastic (PTAC2).